The chain runs to 83 residues: Small ribosomal subunit protein bS16 (83 aa).

This sequence belongs to the bacterial ribosomal protein bS16 family.

This Pseudomonas aeruginosa (strain UCBPP-PA14) protein is Small ribosomal subunit protein bS16.